We begin with the raw amino-acid sequence, 366 residues long: Chorismate synthase (366 aa).

Residues arginine 48 and arginine 54 each contribute to the NADP(+) site. FMN contacts are provided by residues 125–127 (RSS), 237–238 (NA), glycine 277, 292–296 (KPTSS), and arginine 318.

Belongs to the chorismate synthase family. Homotetramer. FMNH2 is required as a cofactor.

The enzyme catalyses 5-O-(1-carboxyvinyl)-3-phosphoshikimate = chorismate + phosphate. It functions in the pathway metabolic intermediate biosynthesis; chorismate biosynthesis; chorismate from D-erythrose 4-phosphate and phosphoenolpyruvate: step 7/7. Functionally, catalyzes the anti-1,4-elimination of the C-3 phosphate and the C-6 proR hydrogen from 5-enolpyruvylshikimate-3-phosphate (EPSP) to yield chorismate, which is the branch point compound that serves as the starting substrate for the three terminal pathways of aromatic amino acid biosynthesis. This reaction introduces a second double bond into the aromatic ring system. The sequence is that of Chorismate synthase from Acidovorax sp. (strain JS42).